An 804-amino-acid chain; its full sequence is Probable phosphoketolase (804 aa).

This sequence belongs to the XFP family. Requires thiamine diphosphate as cofactor.

In Mycobacterium avium (strain 104), this protein is Probable phosphoketolase.